A 465-amino-acid chain; its full sequence is Probable Xaa-Pro aminopeptidase pepP (465 aa).

Mn(2+) contacts are provided by Asp263, Asp274, Glu397, and Glu437.

The protein belongs to the peptidase M24B family. Requires Mn(2+) as cofactor.

The enzyme catalyses Release of any N-terminal amino acid, including proline, that is linked to proline, even from a dipeptide or tripeptide.. Functionally, catalyzes the removal of a penultimate prolyl residue from the N-termini of peptides. This chain is Probable Xaa-Pro aminopeptidase pepP (pepP), found in Emericella nidulans (strain FGSC A4 / ATCC 38163 / CBS 112.46 / NRRL 194 / M139) (Aspergillus nidulans).